A 245-amino-acid polypeptide reads, in one-letter code: U11/U12 small nuclear ribonucleoprotein 35 kDa protein (245 aa).

The 79-residue stretch at 51 to 129 (LTLFVARLNL…HEIFVDYELE (79 aa)) folds into the RRM domain. The segment covering 146 to 162 (GKKESGQLRFGGRDRPF) has biased composition (basic and acidic residues). The tract at residues 146–165 (GKKESGQLRFGGRDRPFRKP) is disordered. Residue Lys-172 forms a Glycyl lysine isopeptide (Lys-Gly) (interchain with G-Cter in SUMO2) linkage. The disordered stretch occupies residues 173-222 (NDQFREGKRERRERSRSRERHWDSRMRDHHDRGREKRWQEREPARAWPEG). Composition is skewed to basic and acidic residues over residues 174–185 (DQFREGKRERRE) and 192–216 (RHWD…REPA).

In terms of assembly, component of the U11/U12 snRNPs that are part of the U12-type spliceosome.

Its subcellular location is the nucleus. The chain is U11/U12 small nuclear ribonucleoprotein 35 kDa protein (SNRNP35) from Bos taurus (Bovine).